The following is a 203-amino-acid chain: A-type ATP synthase subunit E (203 aa).

It belongs to the V-ATPase E subunit family. In terms of assembly, has multiple subunits with at least A(3), B(3), C, D, E, F, H, I and proteolipid K(x).

The protein localises to the cell membrane. Component of the A-type ATP synthase that produces ATP from ADP in the presence of a proton gradient across the membrane. This Methanococcus aeolicus (strain ATCC BAA-1280 / DSM 17508 / OCM 812 / Nankai-3) protein is A-type ATP synthase subunit E.